A 67-amino-acid polypeptide reads, in one-letter code: Peptide Hp1239 (67 aa).

A signal peptide spans methionine 1–alanine 23. Residue phenylalanine 36 is modified to Phenylalanine amide. Positions glycine 40–methionine 67 are excised as a propeptide.

The protein belongs to the non-disulfide-bridged peptide (NDBP) superfamily. Short antimicrobial peptide (group 4) family. As to expression, expressed by the venom gland.

It localises to the secreted. The protein resides in the target cell membrane. Functionally, amphipathic peptide with antibacterial activities. Shows antiviral activities against the herpes simplex virus type-1. It potently inhibits the initial infection by provoking the rupture of viral envelop and the dissociation of proteins from the virions (EC(50) is 0.41 uM). It also effectively inhibits viral attachment (EC(50) is 5.73 uM), viral entry (EC(50) is 4.32 uM) and viral proliferation after infection (EC(50) is 8.41 uM). Morever, it enters mammalian tested cells (Vero) and reduces the intracellular infectivity. This chain is Peptide Hp1239, found in Heterometrus petersii (Asian forest scorpion).